A 61-amino-acid polypeptide reads, in one-letter code: Small ribosomal subunit protein uS14 (61 aa).

Zn(2+) is bound by residues Cys-24, Cys-27, Cys-40, and Cys-43.

This sequence belongs to the universal ribosomal protein uS14 family. Zinc-binding uS14 subfamily. Part of the 30S ribosomal subunit. Contacts proteins S3 and S10. The cofactor is Zn(2+).

Its function is as follows. Binds 16S rRNA, required for the assembly of 30S particles and may also be responsible for determining the conformation of the 16S rRNA at the A site. The protein is Small ribosomal subunit protein uS14 of Carboxydothermus hydrogenoformans (strain ATCC BAA-161 / DSM 6008 / Z-2901).